The primary structure comprises 374 residues: Flagellar P-ring protein 1 (374 aa).

A signal peptide spans Met-1–Ala-26.

It belongs to the FlgI family. In terms of assembly, the basal body constitutes a major portion of the flagellar organelle and consists of four rings (L,P,S, and M) mounted on a central rod.

The protein resides in the periplasm. The protein localises to the bacterial flagellum basal body. Assembles around the rod to form the L-ring and probably protects the motor/basal body from shearing forces during rotation. The protein is Flagellar P-ring protein 1 of Photobacterium profundum (strain SS9).